The primary structure comprises 184 residues: ATP synthase subunit b, chloroplastic (184 aa).

The helical transmembrane segment at 27–49 threads the bilayer; that stretch reads LATNLINLSVVLGVLIFFGKGVL.

Belongs to the ATPase B chain family. As to quaternary structure, F-type ATPases have 2 components, F(1) - the catalytic core - and F(0) - the membrane proton channel. F(1) has five subunits: alpha(3), beta(3), gamma(1), delta(1), epsilon(1). F(0) has four main subunits: a(1), b(1), b'(1) and c(10-14). The alpha and beta chains form an alternating ring which encloses part of the gamma chain. F(1) is attached to F(0) by a central stalk formed by the gamma and epsilon chains, while a peripheral stalk is formed by the delta, b and b' chains.

It is found in the plastid. It localises to the chloroplast thylakoid membrane. Functionally, f(1)F(0) ATP synthase produces ATP from ADP in the presence of a proton or sodium gradient. F-type ATPases consist of two structural domains, F(1) containing the extramembraneous catalytic core and F(0) containing the membrane proton channel, linked together by a central stalk and a peripheral stalk. During catalysis, ATP synthesis in the catalytic domain of F(1) is coupled via a rotary mechanism of the central stalk subunits to proton translocation. Its function is as follows. Component of the F(0) channel, it forms part of the peripheral stalk, linking F(1) to F(0). The chain is ATP synthase subunit b, chloroplastic from Guizotia abyssinica (Niger).